We begin with the raw amino-acid sequence, 103 residues long: Cell division protein FtsB (103 aa).

The Cytoplasmic portion of the chain corresponds to 1 to 3 (MGK). The chain crosses the membrane as a helical span at residues 4–21 (LTLLLLALLVWLQYSLWF). The Periplasmic segment spans residues 22–103 (GKNGIHDYSR…RAGGPAQNNR (82 aa)). Residues 38–62 (VQQATNAKLKARNDQLFAEIDDLNG) are a coiled coil.

This sequence belongs to the FtsB family. In terms of assembly, part of a complex composed of FtsB, FtsL and FtsQ.

The protein localises to the cell inner membrane. Functionally, essential cell division protein. May link together the upstream cell division proteins, which are predominantly cytoplasmic, with the downstream cell division proteins, which are predominantly periplasmic. The sequence is that of Cell division protein FtsB from Cronobacter sakazakii (strain ATCC BAA-894) (Enterobacter sakazakii).